A 345-amino-acid polypeptide reads, in one-letter code: L-threonine 3-dehydrogenase (345 aa).

Cys38 lines the Zn(2+) pocket. Residues Thr40 and His43 each act as charge relay system in the active site. Positions 63, 64, 93, 96, 99, and 107 each coordinate Zn(2+). Residues Ile176, Asp196, Arg201, 263-265 (LGT), and 287-288 (VT) contribute to the NAD(+) site.

The protein belongs to the zinc-containing alcohol dehydrogenase family. In terms of assembly, homotetramer. Requires Zn(2+) as cofactor.

It is found in the cytoplasm. The enzyme catalyses L-threonine + NAD(+) = (2S)-2-amino-3-oxobutanoate + NADH + H(+). It participates in amino-acid degradation; L-threonine degradation via oxydo-reductase pathway; glycine from L-threonine: step 1/2. Functionally, catalyzes the NAD(+)-dependent oxidation of L-threonine to 2-amino-3-ketobutyrate. This is L-threonine 3-dehydrogenase from Cutibacterium acnes (strain DSM 16379 / KPA171202) (Propionibacterium acnes).